A 277-amino-acid polypeptide reads, in one-letter code: NH(3)-dependent NAD(+) synthetase (277 aa).

Residue 47–54 (GISGGQDS) participates in ATP binding. Asp-53 serves as a coordination point for Mg(2+). Residue Arg-141 coordinates deamido-NAD(+). Thr-161 serves as a coordination point for ATP. Glu-166 lines the Mg(2+) pocket. Deamido-NAD(+) contacts are provided by Lys-174 and Asp-181. Lys-190 and Thr-212 together coordinate ATP. Deamido-NAD(+) is bound at residue 261–262 (HK).

The protein belongs to the NAD synthetase family. Homodimer.

It carries out the reaction deamido-NAD(+) + NH4(+) + ATP = AMP + diphosphate + NAD(+) + H(+). The protein operates within cofactor biosynthesis; NAD(+) biosynthesis; NAD(+) from deamido-NAD(+) (ammonia route): step 1/1. Catalyzes the ATP-dependent amidation of deamido-NAD to form NAD. Uses ammonia as a nitrogen source. The polypeptide is NH(3)-dependent NAD(+) synthetase (Lactobacillus johnsonii (strain CNCM I-12250 / La1 / NCC 533)).